The following is a 350-amino-acid chain: tRNA uridine(34) hydroxylase (350 aa).

The Rhodanese domain occupies 146-240 (DDPDAVFIDM…YARRAREQGL (95 aa)). Residue C200 is the Cysteine persulfide intermediate of the active site. The segment covering 319-328 (RRRRAGRENG) has biased composition (basic and acidic residues). Residues 319–350 (RRRRAGRENGNKIFNKSRGRLNSKLSIPDPAE) are disordered.

This sequence belongs to the TrhO family.

It catalyses the reaction uridine(34) in tRNA + AH2 + O2 = 5-hydroxyuridine(34) in tRNA + A + H2O. Catalyzes oxygen-dependent 5-hydroxyuridine (ho5U) modification at position 34 in tRNAs. This Salmonella schwarzengrund (strain CVM19633) protein is tRNA uridine(34) hydroxylase.